The primary structure comprises 388 residues: Protein-glutamate methylesterase/protein-glutamine glutaminase (388 aa).

The region spanning 20 to 138 (RVMVVDDSVV…ESAGAEVFRH (119 aa)) is the Response regulatory domain. Position 71 is a 4-aspartylphosphate (aspartate 71). Residues 193-386 (PTAPRVLLIG…PKLVRLFSGD (194 aa)) form the CheB-type methylesterase domain. Residues serine 204, histidine 232, and aspartate 328 contribute to the active site.

Belongs to the CheB family. In terms of processing, phosphorylated by CheA. Phosphorylation of the N-terminal regulatory domain activates the methylesterase activity.

It is found in the cytoplasm. The catalysed reaction is [protein]-L-glutamate 5-O-methyl ester + H2O = L-glutamyl-[protein] + methanol + H(+). It carries out the reaction L-glutaminyl-[protein] + H2O = L-glutamyl-[protein] + NH4(+). In terms of biological role, involved in chemotaxis. Part of a chemotaxis signal transduction system that modulates chemotaxis in response to various stimuli. Catalyzes the demethylation of specific methylglutamate residues introduced into the chemoreceptors (methyl-accepting chemotaxis proteins or MCP) by CheR. Also mediates the irreversible deamidation of specific glutamine residues to glutamic acid. This Rhodopseudomonas palustris (strain HaA2) protein is Protein-glutamate methylesterase/protein-glutamine glutaminase.